The chain runs to 240 residues: Probable transcriptional regulatory protein Adeh_2184 (240 aa).

The protein belongs to the TACO1 family.

The protein resides in the cytoplasm. This Anaeromyxobacter dehalogenans (strain 2CP-C) protein is Probable transcriptional regulatory protein Adeh_2184.